The chain runs to 545 residues: RNA-directed RNA polymerase beta chain (545 aa).

The RdRp catalytic domain maps to 243 to 373 (RLAQQGSVDG…PNLRKTFVSG (131 aa)).

Part of the viral RNA-dependent RNA polymerase complex, the other subunits are probably the host ribosomal protein S1, EF-Tu and EF-Ts.

It carries out the reaction RNA(n) + a ribonucleoside 5'-triphosphate = RNA(n+1) + diphosphate. This is the catalytic subunit of the viral RNA-dependent RNA polymerase complex. This complex is involved in viral RNA replication that produces (+)-stranded genomes via a complementary, (-)-stranded intermediate. This Escherichia coli (Bacteriophage MS2) protein is RNA-directed RNA polymerase beta chain.